We begin with the raw amino-acid sequence, 26 residues long: Conotoxin Eb6.15 (26 aa).

Disulfide bonds link cysteine 7–cysteine 18 and cysteine 13–cysteine 25.

Belongs to the conotoxin O1 superfamily. Expressed by the venom duct.

It is found in the secreted. This chain is Conotoxin Eb6.15 (E1), found in Conus ebraeus (Hebrew cone).